The following is a 401-amino-acid chain: Tyrosine--tRNA ligase (401 aa).

The short motif at 41–50 (PSRPDLHLGH) is the 'HIGH' region element. Residues 225–229 (KMSKS) carry the 'KMSKS' region motif. K228 serves as a coordination point for ATP. The 62-residue stretch at 334-395 (KNIVDLLVEI…GKRKFYRISG (62 aa)) folds into the S4 RNA-binding domain.

This sequence belongs to the class-I aminoacyl-tRNA synthetase family. TyrS type 2 subfamily. Homodimer.

It is found in the cytoplasm. The catalysed reaction is tRNA(Tyr) + L-tyrosine + ATP = L-tyrosyl-tRNA(Tyr) + AMP + diphosphate + H(+). Catalyzes the attachment of tyrosine to tRNA(Tyr) in a two-step reaction: tyrosine is first activated by ATP to form Tyr-AMP and then transferred to the acceptor end of tRNA(Tyr). This is Tyrosine--tRNA ligase from Thermotoga maritima (strain ATCC 43589 / DSM 3109 / JCM 10099 / NBRC 100826 / MSB8).